An 88-amino-acid polypeptide reads, in one-letter code: Small ribosomal subunit protein uS15 (88 aa).

Belongs to the universal ribosomal protein uS15 family. As to quaternary structure, part of the 30S ribosomal subunit. Forms a bridge to the 50S subunit in the 70S ribosome, contacting the 23S rRNA.

Its function is as follows. One of the primary rRNA binding proteins, it binds directly to 16S rRNA where it helps nucleate assembly of the platform of the 30S subunit by binding and bridging several RNA helices of the 16S rRNA. Functionally, forms an intersubunit bridge (bridge B4) with the 23S rRNA of the 50S subunit in the ribosome. This is Small ribosomal subunit protein uS15 from Sorangium cellulosum (strain So ce56) (Polyangium cellulosum (strain So ce56)).